The primary structure comprises 461 residues: Protein IQ-DOMAIN 2 (461 aa).

A disordered region spans residues Met1–Ala55. An IQ domain is found at Glu114–Arg142. Residues Val141–Asn158 form a calmodulin-binding region. The interval Pro278 to Ser461 is disordered. A compositionally biased stretch (polar residues) spans Leu310–Gln345. The Nuclear localization signal signature appears at Lys425–Thr432.

It belongs to the IQD family. In terms of assembly, binds to multiple calmodulin (CaM) in the presence of Ca(2+) and CaM-like proteins.

It localises to the nucleus. The protein resides in the cytoplasm. The protein localises to the cytoskeleton. May be involved in cooperative interactions with calmodulins or calmodulin-like proteins. Recruits calmodulin proteins to microtubules, thus being a potential scaffold in cellular signaling and trafficking. May associate with nucleic acids and regulate gene expression at the transcriptional or post-transcriptional level. The protein is Protein IQ-DOMAIN 2 of Arabidopsis thaliana (Mouse-ear cress).